The chain runs to 101 residues: Aspartyl/glutamyl-tRNA(Asn/Gln) amidotransferase subunit C (101 aa).

This sequence belongs to the GatC family. In terms of assembly, heterotrimer of A, B and C subunits.

The enzyme catalyses L-glutamyl-tRNA(Gln) + L-glutamine + ATP + H2O = L-glutaminyl-tRNA(Gln) + L-glutamate + ADP + phosphate + H(+). It catalyses the reaction L-aspartyl-tRNA(Asn) + L-glutamine + ATP + H2O = L-asparaginyl-tRNA(Asn) + L-glutamate + ADP + phosphate + 2 H(+). Its function is as follows. Allows the formation of correctly charged Asn-tRNA(Asn) or Gln-tRNA(Gln) through the transamidation of misacylated Asp-tRNA(Asn) or Glu-tRNA(Gln) in organisms which lack either or both of asparaginyl-tRNA or glutaminyl-tRNA synthetases. The reaction takes place in the presence of glutamine and ATP through an activated phospho-Asp-tRNA(Asn) or phospho-Glu-tRNA(Gln). The sequence is that of Aspartyl/glutamyl-tRNA(Asn/Gln) amidotransferase subunit C from Salinispora tropica (strain ATCC BAA-916 / DSM 44818 / JCM 13857 / NBRC 105044 / CNB-440).